We begin with the raw amino-acid sequence, 539 residues long: Glucose-6-phosphate isomerase (539 aa).

E353 (proton donor) is an active-site residue. Residues H384 and K505 contribute to the active site.

This sequence belongs to the GPI family.

It is found in the cytoplasm. It carries out the reaction alpha-D-glucose 6-phosphate = beta-D-fructose 6-phosphate. The protein operates within carbohydrate biosynthesis; gluconeogenesis. It participates in carbohydrate degradation; glycolysis; D-glyceraldehyde 3-phosphate and glycerone phosphate from D-glucose: step 2/4. Functionally, catalyzes the reversible isomerization of glucose-6-phosphate to fructose-6-phosphate. The polypeptide is Glucose-6-phosphate isomerase (Ralstonia nicotianae (strain ATCC BAA-1114 / GMI1000) (Ralstonia solanacearum)).